A 98-amino-acid chain; its full sequence is 10 kDa chaperonin, mitochondrial (98 aa).

The transit peptide at 1 to 17 (MMKRLIPTFNRILVQRV) directs the protein to the mitochondrion. A cpn-10 domain region spans residues 18-94 (IQPAKTESGI…LFRDEDVLGT (77 aa)).

Belongs to the GroES chaperonin family. As to quaternary structure, forms stable complexes with CPN60 in the presence of ATP.

The protein localises to the mitochondrion. In terms of biological role, seems to function only as a co-chaperone, along with CPN60, and in certain cases is essential for the discharge of biologically active proteins from CPN60. In Arabidopsis thaliana (Mouse-ear cress), this protein is 10 kDa chaperonin, mitochondrial (CPN10).